The primary structure comprises 188 residues: dCTP deaminase (188 aa).

Residues 111–116 (KSTYAR), 135–137 (TLE), Q156, Y170, and Q180 contribute to the dCTP site. The active-site Proton donor/acceptor is the E137.

This sequence belongs to the dCTP deaminase family. In terms of assembly, homotrimer.

The enzyme catalyses dCTP + H2O + H(+) = dUTP + NH4(+). It functions in the pathway pyrimidine metabolism; dUMP biosynthesis; dUMP from dCTP (dUTP route): step 1/2. Catalyzes the deamination of dCTP to dUTP. The polypeptide is dCTP deaminase (Herminiimonas arsenicoxydans).